The sequence spans 518 residues: D-aminopeptidase (518 aa).

The Nucleophile role is filled by Ser62. Lys65 functions as the Proton donor/acceptor in the catalytic mechanism. A disordered region spans residues 373–392; the sequence is FGTGPEKMDISGENEAQSSM. The interval 477–487 is important for specificity; it reads QRSMDAPSPGE. Asp481 lines the substrate pocket.

It belongs to the peptidase S12 family. In terms of assembly, homodimer.

The enzyme catalyses Release of an N-terminal D-amino acid from a peptide, Xaa-|-Yaa-, in which Xaa is preferably D-Ala, D-Ser or D-Thr. D-amino acid amides and methyl esters also are hydrolyzed, as is glycine amide.. Its activity is regulated as follows. Inhibited by beta-lactam compounds such as 6-aminopenicillic acid, 7-aminocephalosporanic acid, benzylpenicillin and ampicillin. Inhibited by p-chloromercuribenzoate. Functionally, hydrolyzes N-terminal residues in D-amino acid-containing peptides. This chain is D-aminopeptidase, found in Brucella melitensis biotype 1 (strain ATCC 23456 / CCUG 17765 / NCTC 10094 / 16M).